A 393-amino-acid polypeptide reads, in one-letter code: Triacylglycerol lipase 1 (393 aa).

Positions 1-20 are cleaved as a signal peptide; it reads MKWLLVAVLTSLTIFSALTQ. A glycan (N-linked (GlcNAc...) asparagine) is linked at Asn-41. Ser-166 serves as the catalytic Nucleophile. Asn-261 carries an N-linked (GlcNAc...) asparagine glycan. Catalysis depends on charge relay system residues Asp-334 and His-363.

It belongs to the AB hydrolase superfamily. Lipase family. In terms of tissue distribution, expressed in seedlings, roots, leaves, flowers and siliques. Specifically expressed in the epidermis.

The protein localises to the secreted. The catalysed reaction is a triacylglycerol + H2O = a diacylglycerol + a fatty acid + H(+). It catalyses the reaction 1,2,3-tributanoylglycerol + H2O = dibutanoylglycerol + butanoate + H(+). The enzyme catalyses 1,2,3-trioctanoylglycerol + H2O = dioctanoylglycerol + octanoate + H(+). Its pathway is lipid metabolism; glycerolipid metabolism. Triacylglycerol (TAG) lipase active on triolein, trioctanoin, tributyrin and 1,3-Diolein, but not on phospho- and galactolipids. Involved but dispensable for TAG storage breakdown during seed germination. The polypeptide is Triacylglycerol lipase 1 (Arabidopsis thaliana (Mouse-ear cress)).